The following is a 65-amino-acid chain: Metallothionein-like protein type 3 (65 aa).

It belongs to the metallothionein superfamily. Type 15 family.

Its function is as follows. Metallothioneins have a high content of cysteine residues that bind various heavy metals. The protein is Metallothionein-like protein type 3 of Musa acuminata (Banana).